The following is a 357-amino-acid chain: Protein RecA (357 aa).

Residue 69 to 76 coordinates ATP; sequence GPESSGKT. A disordered region spans residues 337–357; it reads SANSVAKNNEDDEDEDVEEEE. The span at 346–357 shows a compositional bias: acidic residues; sequence EDDEDEDVEEEE.

The protein belongs to the RecA family.

It is found in the cytoplasm. Can catalyze the hydrolysis of ATP in the presence of single-stranded DNA, the ATP-dependent uptake of single-stranded DNA by duplex DNA, and the ATP-dependent hybridization of homologous single-stranded DNAs. It interacts with LexA causing its activation and leading to its autocatalytic cleavage. This is Protein RecA from Nostoc sp. (strain PCC 7120 / SAG 25.82 / UTEX 2576).